The primary structure comprises 185 residues: MISDIRKDAEIRMEKCVEAFKNQISKIRTGRASPSLLDGIVVEYYGTPTPLRQLASVTVEDSRTLKINVFDRSMSAAVEKAIMASDLGLNPSSAGSDIRVPLPPLTEERRKDLTKIVRGEAEQARVAVRNVRRDANDKVKALLKEKEISEDDDRRSQDDVQKMTDAAIKKVDAALADKEAELMQF.

The protein belongs to the RRF family.

It localises to the cytoplasm. Functionally, responsible for the release of ribosomes from messenger RNA at the termination of protein biosynthesis. May increase the efficiency of translation by recycling ribosomes from one round of translation to another. The protein is Ribosome-recycling factor of Klebsiella pneumoniae (strain 342).